We begin with the raw amino-acid sequence, 646 residues long: MAKIIGIDLGTTNSCVAVLEGDKVKVIENAEGARTTPSIIAYKDGEILVGQSAKRQAVTNPKNTLFAIKRLIGRRYEDQAVQKDIGLVPYKIIKADNGDAWVEVNDKKLAPQQISAEILKKMKKTAEDYLGETVTEAVITVPAYFNDAQRQATKDAGKIAGLDVKRIINEPTAAALAFGMDKKEGDRKVAVYDLGGGTFDVSIIEIADLDGDQQIEVLSTNGDTFLGGEDFDNALIEYLVEEFKKEQNVNLKNDPLALQRLKEAAEKAKIELSSSNATEINLPYITADATGPKHLVINVTRAKLEGLVADLVARTIEPCKIALKDAGLSTSDISDVILVGGQSRMPLVQQKVQEFFGREPRKDVNPDEAVAIGAAIQGAVLSGDKNDVLLLDVTPLTLGIETMGGVLTPIIEKNTTIPAKKSQVFSTAADNQPAVDISVYQGERKMAQQNKLLGNFQLGDIPPAPRGVPQIEVSFDINADGILKVSAKDKSTGKEQSIQIKANSGLSDAEIEAMIKDAEANAEEDRKFEELAKARNEADALISSSNKAVKDLGDKVTEDEKTAVNTAVSELEAATKENDVEAIKAKTEALQNILMPITQRAYEQAQQAGGAEGFDPNAFQGGDAGQQKADDGVVDAEFTEVKDDKK.

Threonine 198 is subject to Phosphothreonine; by autocatalysis. Positions 603–646 are disordered; that stretch reads EQAQQAGGAEGFDPNAFQGGDAGQQKADDGVVDAEFTEVKDDKK. Residues 618-627 are compositionally biased toward low complexity; that stretch reads AFQGGDAGQQ.

The protein belongs to the heat shock protein 70 family.

Functionally, acts as a chaperone. This chain is Chaperone protein DnaK, found in Acinetobacter baumannii (strain ACICU).